The sequence spans 286 residues: MSNAEASRVYEIIVESVVNEVREDFENAGIDEQTLQDLKNIWQKKLTETKVTTFSWDNQFNEGNINGVQNDLNFNLATPGVNSSEFNIKEENTGNEGLILPNINSNNNIPHSGETNINTNTVEATNNSGATLNTNTSGNTNADVTSQPKIEVKPEIELTINNANITTVENIDDESEKKDDEEKEEDVEKTRKEKEQIEQVKLQAKKEKRSALLDTDEVGSELDDSDDDYLISEGEEDGPDENLMLCLYDKVTRTKARWKCSLKDGVVTINRNDYTFQKAQVEAEWV.

3 disordered regions span residues Asn120–Thr145, Thr167–Glu195, and Lys208–Glu236. Residues Ser175–Glu195 show a composition bias toward basic and acidic residues. Residues Asp214–Glu236 are compositionally biased toward acidic residues.

This sequence belongs to the TFIIA subunit 1 family. As to quaternary structure, TFIIA is a heterodimer composed of the large TOA1 and a small TOA2 subunits. Interacts with KAP122.

It localises to the cytoplasm. The protein localises to the nucleus. Functionally, TFIIA is a component of the transcription machinery of RNA polymerase II and implicated in the regulation of basal transcription. Interacts with TBP (the TATA-binding protein). In Saccharomyces cerevisiae (strain ATCC 204508 / S288c) (Baker's yeast), this protein is Transcription initiation factor IIA large subunit (TOA1).